Here is a 258-residue protein sequence, read N- to C-terminus: Short-chain dehydrogenase/reductase olcF (258 aa).

3 residues coordinate NADP(+): V12, D58, and R120. The active-site Proton donor is the S138. Positions 152, 156, and 185 each coordinate NADP(+). The Proton acceptor role is filled by Y152. K156 functions as the Lowers pKa of active site Tyr in the catalytic mechanism.

It belongs to the short-chain dehydrogenases/reductases (SDR) family.

It participates in secondary metabolite biosynthesis; terpenoid biosynthesis. Functionally, short-chain dehydrogenase/reductase; part of the gene cluster that mediates the biosynthesis of 15-deoxyoxalicine B. The first step of the pathway is the synthesis of nicotinyl-CoA from nicotinic acid by the nicotinic acid-CoA ligase olcI. Nicotinyl-CoA is then a substrate of polyketide synthase olcA to produce 4-hydroxy-6-(3-pyridinyl)-2H-pyran-2-one (HPPO) which is further prenylated by the polyprenyl transferase olcH to yield geranylgeranyl-HPPO. Geranylgeranyl pyrophosphate is provided by the cluster-specific geranylgeranyl pyrophosphate synthase olcC. The FAD-dependent monooxygenase olcE catalyzes the epoxidation of geranylgeranyl-HPPO and the terpene cyclase olcD catalyzes the cyclization of the terpenoid component, resulting in the formation of the tricyclic terpene moiety seen in predecaturin E. The cytochrome P450 monooxygenase then catalyzes the allylic oxidation of predecaturin E, which is followed by spirocylization with concomitant loss of one molecule of water to form decaturin E. Decaturin E is the substrate of the cytochrome P450 monooxygenase olcJ which hydroxylates it at the C-29 position to form decaturin F. The short-chain dehydrogenase/reductase olcF may catalyze the oxidation of decaturin F to generate the 29-hydroxyl-27-one intermediate, and subsequent hemiacetal formation probably leads to the formation of decaturin C. The dioxygenase olcK may be a peroxisomal enzyme that catalyzes the hydroxylation of decaturin C into decaturin A once decaturin C is shuttled into the peroxisome by the MFS transporter olcL. Finally the cytochrome P450 monooxygenase olcB catalyzes the oxidative rearrangement to yield 15-deoxyoxalicine B. In the absence of olcJ, decaturin E may be shunted to a pathway in which it is oxidized to a ketone, possibly by olcF, to form decaturin D, which undergoes further allylic oxidation to yield decaturin G. Moreover, in the absence of oclK or oclL, oclB can convert decaturin C into 15-deoxyoxalicine A. The chain is Short-chain dehydrogenase/reductase olcF from Penicillium canescens.